Here is a 463-residue protein sequence, read N- to C-terminus: tRNA (guanine(10)-N(2))-methyltransferase TRMT11 (463 aa).

Alanine 2 carries the N-acetylalanine modification.

This sequence belongs to the class I-like SAM-binding methyltransferase superfamily. TRM11 methyltransferase family. As to quaternary structure, part of the heterodimeric TRMT11-TRM112 methyltransferase complex; this complex forms an active tRNA methyltransferase, where TRMT112 acts as an activator of the catalytic subunit TRMT11.

The protein localises to the cytoplasm. The enzyme catalyses guanosine(10) in tRNA + S-adenosyl-L-methionine = N(2)-methylguanosine(10) in tRNA + S-adenosyl-L-homocysteine + H(+). In terms of biological role, catalytic subunit of the TRMT11-TRM112 methyltransferase complex, that specifically mediates the S-adenosyl-L-methionine-dependent N(2)-methylation of guanosine nucleotide at position 10 (m2G10) in tRNAs. This is one of the major tRNA (guanine-N(2))-methyltransferases. This is tRNA (guanine(10)-N(2))-methyltransferase TRMT11 from Homo sapiens (Human).